The chain runs to 118 residues: Transcriptional regulator WhiB4 (118 aa).

Positions 36–92 (LCRTTDPDELFVRGAAQRKAAVICRHCPVMQECAADALDNKVEFGVWGGMTERQRRA) constitute a 4Fe-4S Wbl-type domain. [4Fe-4S] cluster contacts are provided by C37, C59, C62, and C68. Cystine bridges form between C37/C68 and C59/C62.

This sequence belongs to the WhiB family. It depends on [4Fe-4S] cluster as a cofactor. Post-translationally, the Fe-S cluster can be nitrosylated by nitric oxide (NO). Upon Fe-S cluster removal intramolecular disulfide bonds are formed.

Its subcellular location is the cytoplasm. Its function is as follows. Acts as a transcriptional regulator. Probably redox-responsive. The apo- but not holo-form probably binds DNA. This is Transcriptional regulator WhiB4 (whiB4) from Mycobacterium tuberculosis (strain CDC 1551 / Oshkosh).